Here is a 327-residue protein sequence, read N- to C-terminus: Tetraacyldisaccharide 4'-kinase (327 aa).

Residue 58-65 (TVGGTGKT) coordinates ATP.

Belongs to the LpxK family.

The enzyme catalyses a lipid A disaccharide + ATP = a lipid IVA + ADP + H(+). It functions in the pathway glycolipid biosynthesis; lipid IV(A) biosynthesis; lipid IV(A) from (3R)-3-hydroxytetradecanoyl-[acyl-carrier-protein] and UDP-N-acetyl-alpha-D-glucosamine: step 6/6. Its function is as follows. Transfers the gamma-phosphate of ATP to the 4'-position of a tetraacyldisaccharide 1-phosphate intermediate (termed DS-1-P) to form tetraacyldisaccharide 1,4'-bis-phosphate (lipid IVA). The polypeptide is Tetraacyldisaccharide 4'-kinase (Alcanivorax borkumensis (strain ATCC 700651 / DSM 11573 / NCIMB 13689 / SK2)).